Reading from the N-terminus, the 473-residue chain is Ribulose bisphosphate carboxylase large chain (473 aa).

The propeptide occupies 1-2; the sequence is MS. The residue at position 3 (proline 3) is an N-acetylproline. An N6,N6,N6-trimethyllysine modification is found at lysine 14. The substrate site is built by asparagine 123 and threonine 173. Lysine 175 functions as the Proton acceptor in the catalytic mechanism. Lysine 177 serves as a coordination point for substrate. Residues lysine 201, aspartate 203, and glutamate 204 each coordinate Mg(2+). The residue at position 201 (lysine 201) is an N6-carboxylysine. Histidine 294 acts as the Proton acceptor in catalysis. Arginine 295, histidine 327, and serine 379 together coordinate substrate.

This sequence belongs to the RuBisCO large chain family. Type I subfamily. In terms of assembly, heterohexadecamer of 8 large chains and 8 small chains; disulfide-linked. The disulfide link is formed within the large subunit homodimers. Mg(2+) is required as a cofactor. Post-translationally, the disulfide bond which can form in the large chain dimeric partners within the hexadecamer appears to be associated with oxidative stress and protein turnover.

It is found in the plastid. Its subcellular location is the chloroplast. It catalyses the reaction 2 (2R)-3-phosphoglycerate + 2 H(+) = D-ribulose 1,5-bisphosphate + CO2 + H2O. The catalysed reaction is D-ribulose 1,5-bisphosphate + O2 = 2-phosphoglycolate + (2R)-3-phosphoglycerate + 2 H(+). Its function is as follows. RuBisCO catalyzes two reactions: the carboxylation of D-ribulose 1,5-bisphosphate, the primary event in carbon dioxide fixation, as well as the oxidative fragmentation of the pentose substrate in the photorespiration process. Both reactions occur simultaneously and in competition at the same active site. This Vigna unguiculata (Cowpea) protein is Ribulose bisphosphate carboxylase large chain.